Consider the following 612-residue polypeptide: MACPF domain-containing protein NSL1 (612 aa).

The MACPF domain maps to 5–338 (NFTRLDAHSA…PPIEELHQFL (334 aa)).

Belongs to the complement C6/C7/C8/C9 (TC 1.C.39) family.

Functionally, negatively controls the salicylic acid (SA)-mediated pathway of programmed cell death in plant immunity. This is MACPF domain-containing protein NSL1 (NSL1) from Arabidopsis thaliana (Mouse-ear cress).